The chain runs to 234 residues: MNQLVDPKVVIALDYQDKQQALHFISQLDPKHCRLKVGKEMFTHFGPEFVKQLVAKEFDVFLDLKFHDIPNTVASAVKVAADLGVWMVNVHASGGRRMMEAAKKILEPYGTNAPLLIAVTVLTSMDQSDLQELGIELSPAEQVKRLAKLAKLSGLDGVVCSAHEAQELKTLLGAEFKLITPGIRPMGSDAGDQRRIMTPKQAIDAGSDYLVIGRPITRATNPVEVLKNINDSLV.

Substrate is bound by residues D14, K36, 63–72 (DLKFHDIPNT), T123, R184, Q193, G213, and R214. K65 functions as the Proton donor in the catalytic mechanism.

This sequence belongs to the OMP decarboxylase family. Type 1 subfamily. As to quaternary structure, homodimer.

It carries out the reaction orotidine 5'-phosphate + H(+) = UMP + CO2. Its pathway is pyrimidine metabolism; UMP biosynthesis via de novo pathway; UMP from orotate: step 2/2. Catalyzes the decarboxylation of orotidine 5'-monophosphate (OMP) to uridine 5'-monophosphate (UMP). This chain is Orotidine 5'-phosphate decarboxylase, found in Psychromonas ingrahamii (strain DSM 17664 / CCUG 51855 / 37).